Consider the following 801-residue polypeptide: Na(+)/H(+) antiporter subunit A1 (801 aa).

A run of 20 helical transmembrane segments spans residues 1-21 (MSLL…IPFL), 30-50 (LGWF…SLIS), 79-99 (LGLL…LYSI), 117-137 (LFMG…LYLF), 166-186 (LIIT…LSLA), 206-226 (PFFI…SAQV), 228-250 (FYIW…HSAT), 265-285 (IFAI…ITLF), 300-320 (ILAF…GIGA), 337-357 (FVAA…LFMI), 373-393 (LGGL…TTLS), 427-447 (LGIL…VYSI), 472-492 (ILML…GLFP), 522-542 (GITP…LLLI), 591-611 (LVII…SVPF), 623-643 (VFEG…IFAK), 646-666 (LFSI…FIFF), 671-691 (LALT…LCFY), 707-727 (LTNA…GLIG), and 764-784 (MDTL…YTMI).

It belongs to the CPA3 antiporters (TC 2.A.63) subunit A family. In terms of assembly, may form a heterooligomeric complex that consists of seven subunits: mnhA1, mnhB1, mnhC1, mnhD1, mnhE1, mnhF1 and mnhG1.

It localises to the cell membrane. Its function is as follows. Mnh complex is a Na(+)/H(+) antiporter involved in Na(+) excretion. This is Na(+)/H(+) antiporter subunit A1 (mnhA1) from Staphylococcus epidermidis (strain ATCC 35984 / DSM 28319 / BCRC 17069 / CCUG 31568 / BM 3577 / RP62A).